The primary structure comprises 337 residues: Transcription initiation factor IIB (337 aa).

Residues 36-68 (SVQSVCPECGSRQLVHDYERAELVCQNCGLVLD) form a TFIIB-type zinc finger. Residues Cys-41, Cys-44, Cys-60, and Cys-63 each coordinate Zn(2+). 2 repeat units span residues 154-237 (SELD…SREL) and 248-329 (DYVP…ELAE).

This sequence belongs to the TFIIB family.

Functionally, stabilizes TBP binding to an archaeal box-A promoter. Also responsible for recruiting RNA polymerase II to the pre-initiation complex (DNA-TBP-TFIIB). The polypeptide is Transcription initiation factor IIB (Methanoculleus marisnigri (strain ATCC 35101 / DSM 1498 / JR1)).